Here is a 361-residue protein sequence, read N- to C-terminus: Phosphoserine aminotransferase (361 aa).

Arginine 42 contacts L-glutamate. Pyridoxal 5'-phosphate is bound by residues 76 to 77 (AR), tryptophan 102, threonine 153, aspartate 173, and glutamine 196. Lysine 197 carries the post-translational modification N6-(pyridoxal phosphate)lysine. 238 to 239 (NT) contributes to the pyridoxal 5'-phosphate binding site.

Belongs to the class-V pyridoxal-phosphate-dependent aminotransferase family. SerC subfamily. As to quaternary structure, homodimer. Pyridoxal 5'-phosphate serves as cofactor.

The protein resides in the cytoplasm. It catalyses the reaction O-phospho-L-serine + 2-oxoglutarate = 3-phosphooxypyruvate + L-glutamate. The enzyme catalyses 4-(phosphooxy)-L-threonine + 2-oxoglutarate = (R)-3-hydroxy-2-oxo-4-phosphooxybutanoate + L-glutamate. It participates in amino-acid biosynthesis; L-serine biosynthesis; L-serine from 3-phospho-D-glycerate: step 2/3. The protein operates within cofactor biosynthesis; pyridoxine 5'-phosphate biosynthesis; pyridoxine 5'-phosphate from D-erythrose 4-phosphate: step 3/5. In terms of biological role, catalyzes the reversible conversion of 3-phosphohydroxypyruvate to phosphoserine and of 3-hydroxy-2-oxo-4-phosphonooxybutanoate to phosphohydroxythreonine. In Yersinia enterocolitica serotype O:8 / biotype 1B (strain NCTC 13174 / 8081), this protein is Phosphoserine aminotransferase.